Reading from the N-terminus, the 427-residue chain is Isocitrate dehydrogenase [NADP] (427 aa).

Thr-114 is an NADP(+) binding site. D-threo-isocitrate contacts are provided by Ser-123, Asn-125, Arg-129, Arg-139, and Arg-163. Residue Asp-317 coordinates Mg(2+). NADP(+) contacts are provided by residues 349–355, Asn-362, Tyr-401, and Arg-405; that span reads HGTAPKY.

Belongs to the isocitrate and isopropylmalate dehydrogenases family. Homodimer. Mg(2+) serves as cofactor. Requires Mn(2+) as cofactor.

It catalyses the reaction D-threo-isocitrate + NADP(+) = 2-oxoglutarate + CO2 + NADPH. Catalyzes the oxidative decarboxylation of isocitrate to 2-oxoglutarate and carbon dioxide with the concomitant reduction of NADP(+). The polypeptide is Isocitrate dehydrogenase [NADP] (icd) (Coxiella burnetii (strain RSA 493 / Nine Mile phase I)).